We begin with the raw amino-acid sequence, 248 residues long: Adenylate kinase isoenzyme 6 homolog HBR1 (248 aa).

Residues Gly-19, Gly-21, Lys-22, Ser-23, and Ser-24 each coordinate ATP. The interval 49 to 72 (NISEIAKERDCIESYDAKLDTSIV) is NMPbind. The interval 124-134 (TRNYNDLKLQE) is LID. Arg-125 is an ATP binding site. The segment at 188–248 (DGVSNELNKQ…EMEHTEDIAQ (61 aa)) is disordered. Over residues 202 to 238 (DSSDEGDDNSDSDEYELEEDEQEEEEEREEYDEETNE) the composition is skewed to acidic residues. Positions 239–248 (EMEHTEDIAQ) are enriched in basic and acidic residues.

It belongs to the adenylate kinase family. AK6 subfamily. Interacts with small ribosomal subunit protein uS11. Not a structural component of 43S pre-ribosomes, but transiently interacts with them by binding to uS11.

Its subcellular location is the cytoplasm. The protein localises to the nucleus. It catalyses the reaction AMP + ATP = 2 ADP. It carries out the reaction ATP + H2O = ADP + phosphate + H(+). Broad-specificity nucleoside monophosphate (NMP) kinase that catalyzes the reversible transfer of the terminal phosphate group between nucleoside triphosphates and monophosphates. Also has ATPase activity. Involved in the late cytoplasmic maturation steps of the 40S ribosomal particles, specifically 18S rRNA maturation. While NMP activity is not required for ribosome maturation, ATPase activity is. Associates transiently with small ribosomal subunit protein uS11. ATP hydrolysis breaks the interaction with uS11. May temporarily remove uS11 from the ribosome to enable a conformational change of the ribosomal RNA that is needed for the final maturation step of the small ribosomal subunit. Its NMP activity may have a role in nuclear energy homeostasis. Induces transcription of mating-type proteins ALPHA1 and ALPHA2 and moderately represses transcription of mating-type protein A1 in response to hemoglobin and growth signals. Involved in the induction of a high affinity fibronectin receptor by sub-inhibitory dosages of caspofungin. The protein is Adenylate kinase isoenzyme 6 homolog HBR1 (HBR1) of Candida albicans (strain SC5314 / ATCC MYA-2876) (Yeast).